The following is a 496-amino-acid chain: Beta-amylase (496 aa).

Substrate-binding residues include Asp-54, His-94, and Asp-102. The Proton donor role is filled by Glu-187. The substrate site is built by Lys-296, His-301, and Thr-343. Glu-381 acts as the Proton acceptor in catalysis. Substrate-binding positions include 382–383 (NA) and Arg-421.

Belongs to the glycosyl hydrolase 14 family.

The catalysed reaction is Hydrolysis of (1-&gt;4)-alpha-D-glucosidic linkages in polysaccharides so as to remove successive maltose units from the non-reducing ends of the chains.. The protein is Beta-amylase (BMY1) of Vigna unguiculata (Cowpea).